The primary structure comprises 704 residues: Elongation factor G (704 aa).

In terms of domain architecture, tr-type G spans 8-290; the sequence is ARYRNIGISA…AVIDYLPSPV (283 aa). Residues 17 to 24, 88 to 92, and 142 to 145 contribute to the GTP site; these read AHIDAGKT, DTPGH, and NKMD. N6-acetyllysine is present on residues lysine 504 and lysine 643.

This sequence belongs to the TRAFAC class translation factor GTPase superfamily. Classic translation factor GTPase family. EF-G/EF-2 subfamily.

It is found in the cytoplasm. Catalyzes the GTP-dependent ribosomal translocation step during translation elongation. During this step, the ribosome changes from the pre-translocational (PRE) to the post-translocational (POST) state as the newly formed A-site-bound peptidyl-tRNA and P-site-bound deacylated tRNA move to the P and E sites, respectively. Catalyzes the coordinated movement of the two tRNA molecules, the mRNA and conformational changes in the ribosome. The polypeptide is Elongation factor G (Shigella sonnei (strain Ss046)).